The chain runs to 244 residues: tRNA pseudouridine synthase A (244 aa).

The Nucleophile role is filled by Asp-52. Position 111 (Tyr-111) interacts with substrate.

Belongs to the tRNA pseudouridine synthase TruA family. Homodimer.

The enzyme catalyses uridine(38/39/40) in tRNA = pseudouridine(38/39/40) in tRNA. Functionally, formation of pseudouridine at positions 38, 39 and 40 in the anticodon stem and loop of transfer RNAs. This is tRNA pseudouridine synthase A from Thermosipho africanus (strain TCF52B).